Consider the following 474-residue polypeptide: Vacuolar basic amino acid transporter 2 (474 aa).

The Cytoplasmic portion of the chain corresponds to 1–33 (MSISNWITTAYLITSTSFQPLYGSFSDALGRRN). The chain crosses the membrane as a helical span at residues 34 to 54 (CLFFANGAFTIGCLACGFSKN). Over 55–62 (IYMLSFMR) the chain is Vacuolar. Residues 63 to 85 (ALTGIGGGGLITLSTIVNSDVIP) form a helical membrane-spanning segment. Residues 86-97 (SSKRGIFQAFQN) are Cytoplasmic-facing. A helical transmembrane segment spans residues 98 to 118 (LLLGFGAICGASFGGTIASSI). The Vacuolar portion of the chain corresponds to 119-121 (GWR). A helical membrane pass occupies residues 122-142 (WCFLIQVPISVISSILMNYYV). Over 143–167 (PNQKEYNRQNSSIFQNPGKILRDID) the chain is Cytoplasmic. A helical membrane pass occupies residues 168 to 188 (VMGSILIITGLTLQLLYLSLG). Residues 189–196 (CSTSKLSW) are Vacuolar-facing. The helical transmembrane segment at 197-217 (TSPSVLLLLVGSVIILLLFIL) threads the bilayer. Residues 218-238 (HERKTSARAIIPMELVNSSYS) lie on the Cytoplasmic side of the membrane. A helical membrane pass occupies residues 239 to 259 (VVVLSISILVGFASYAYLFTL). The Vacuolar segment spans residues 260-273 (PLFFQIVLGDSTAK). Residues 274–294 (AGLRLTIPSLFTPVGSLITGF) form a helical membrane-spanning segment. At 295–303 (SMSKYNCLR) the chain is on the cytoplasmic side. The chain crosses the membrane as a helical span at residues 304–324 (LLLYIGISLMFLGNFLFLFIE). Over 325 to 331 (KTSPNWL) the chain is Vacuolar. The chain crosses the membrane as a helical span at residues 332–352 (IGLFLIPANLGQGITFPTTLF). The Cytoplasmic portion of the chain corresponds to 353–375 (TFIFMFSKSDQATATSTLYLFRS). Residues 376 to 396 (IGSVWGVAISAGVIQLSFAGL) form a helical membrane-spanning segment. At 397-447 (LRSNLKGLLDENKIKKLIVQLSANSSYIGSLHGEVKNTVIKSFDEATKRAH) the chain is on the vacuolar side. N-linked (GlcNAc...) asparagine glycosylation is present at asparagine 420. A helical transmembrane segment spans residues 448-468 (LMSTLLSSLALILCILKDNLA). Topologically, residues 469-474 (KPKTRR) are cytoplasmic.

The protein belongs to the major facilitator superfamily.

It localises to the vacuole membrane. In terms of biological role, transporter required for vacuolar uptake of histidine, arginine and lysine and to a lesser extent tyrosine. This Saccharomyces cerevisiae (strain ATCC 204508 / S288c) (Baker's yeast) protein is Vacuolar basic amino acid transporter 2 (VBA2).